The chain runs to 554 residues: Flavin-dependent halogenase ascD (554 aa).

The FAD site is built by glycine 15, glycine 18, and glutamate 48. 2 residues coordinate chloride: serine 331 and glycine 332. Valine 333 contacts FAD.

Belongs to the flavin-dependent halogenase family.

The catalysed reaction is ilicicolin B + FADH2 + chloride + O2 = ilicicolin A + FAD + 2 H2O + H(+). It functions in the pathway secondary metabolite biosynthesis; terpenoid biosynthesis. In terms of biological role, flavin-dependent halogenase; part of the asc-1 gene cluster that mediates the biosynthesis of both ascochlorin and ascofuranone, a strong inhibitor of cyanide-insensitive alternative oxidases and a promising drug candidate against African trypanosomiasis. The first step in the pathway is performed by the non-reducing polyketide synthase ascC that produces orsellinic acid by condensing acetyl-CoA with 3 malonyl-CoA units. Orsellinic acid is then prenylated by the prenyltransferase ascA to yield ilicicolinic acid B. Ilicicolinic acid B is further reduced to ilicicolin B by the reductase ascB. The halogenase ascD then chlorinates ilicicolin B to produce ilicicolin A which is converted to ilicicolin A epoxide by the cytochrome P450 monooxygenase ascE that catalyzes stereoselective epoxidation of the terminal double bond of the prenyl group. Ilicicolin A epoxide is the last common precursor for the biosynthesis of ascofuranone and ascochlorin. The terpene cyclase ascF produces a monocyclic terpene, and the cyclization reaction is proposed to be initiated by protonation of the terminal epoxide of ilicicolin A epoxide to generate a monocyclic tertiarycation, which is followed by a series of hydride and methyl shifts with abstraction of proton, leading to the formation of the (14S,15R,19R)-trimethylcyclohexanone ring structure of ilicicolin C, which is finally reduced to ascochlorin by the dehydrogenase ascG. On the other hand, ilicicolin A epoxide is hydroxylated by the cytochrome P450 monooxygenase ascH, and the resultant product is cyclized by the terpene cyclase ascI to ascofuranol via protonation-initiated epoxide ring opening, which facilitates the 6-endo-tet cyclization to form the tetrahy-drofuran ring. Finally, ascofuranol is oxidized into ascofuranone by ascJ. The protein is Flavin-dependent halogenase ascD of Acremonium egyptiacum (Oospora egyptiaca).